We begin with the raw amino-acid sequence, 2248 residues long: Zinc finger protein lin-13 (2248 aa).

The disordered stretch occupies residues 1–189; it reads MDEFELFQQL…TYASQYSRPP (189 aa). Polar residues predominate over residues 29–38; it reads QQANNNQSAP. Residues 54-92 are compositionally biased toward basic and acidic residues; the sequence is KQREEEEAQRLADFMQKDMKEPAVKRKRGSEEYKKDPLE. Over residues 145–155 the composition is skewed to acidic residues; the sequence is ELDENYMEENE. The short motif at 440–444 is the Required for interaction with hpl-2 isoform a element; that stretch reads PLVPV. The C2H2-type 1 zinc finger occupies 503-525; the sequence is HTCIKCGKTFGTEFMLKHHAQSH. Residues 603-665 are disordered; sequence KTKKENRNIT…FTSSKQKKKR (63 aa). Positions 605 to 620 are enriched in basic and acidic residues; sequence KKENRNITDSNEKEFS. 6 C2H2-type zinc fingers span residues 812 to 837, 959 to 982, 1140 to 1162, 1556 to 1578, 1601 to 1623, and 1657 to 1680; these read VRCI…SDVH, YSCS…TRFH, LMCY…MDDH, FKCQ…MRDH, WLCR…MAIH, and YSCG…SVAH. The span at 1859-1877 shows a compositional bias: polar residues; the sequence is PRSSLQTNGSSMGSVTTNG. A disordered region spans residues 1859–1900; sequence PRSSLQTNGSSMGSVTTNGGRVVRPSPPNSMNVTLRRAPPQQ.

Interacts (via PLVPV motif) with chromobox protein homolog hpl-2 (via chromo (shadow subtype) domain); the interaction is direct and influences localization of hpl-2 to nuclear foci. As to expression, in the L3 stage, expressed in syncytial hypodermal cell 7, body wall muscles, intestinal cells, distal tip cells and many neurons.

Its subcellular location is the nucleus. In terms of biological role, involved in repression of vulval fate, possibly by a tumor suppressor protein Rb-mediated mechanism. May act in a common pathway with retinoblastoma-like protein homolog lin-35 and hpl-2 to influence the ER stress response in the intestine. Plays a role in recruiting chromobox protein homolog hpl-2 to specific chromatin sites. The polypeptide is Zinc finger protein lin-13 (lin-13) (Caenorhabditis elegans).